Here is a 797-residue protein sequence, read N- to C-terminus: Speckle targeted PIP5K1A-regulated poly(A) polymerase (797 aa).

Residues 14–44 form a Matrin-type zinc finger; the sequence is FHCNLCHVNIPNRPSLEDHVKGKKHLHLLRL. An RRM domain is found at 54–126; that stretch reads NSVFVSGFKA…LKLRVKPREK (73 aa). Serine 205 contacts ATP. Mg(2+) contacts are provided by aspartate 216 and aspartate 218. The UTP site is built by aspartate 216, aspartate 218, asparagine 319, arginine 341, tyrosine 363, and histidine 495. Position 319 (asparagine 319) interacts with ATP. One can recognise a PAP-associated domain in the interval 421–495; it reads DLCTLLFGFF…NVLDPFELNH (75 aa). Positions 544–787 are KA1; binds the bulging loops of U6 snRNA but is dispensable for terminal uridylyltransferase activity; the sequence is QSEAAASSQP…FLPKMAETIM (244 aa). The segment at 611–659 is disordered; sequence EETQSLDKTDKSGSEMEVNNNRSLEDTNIQVKGEAGKKRPLSVEEGPST. A compositionally biased stretch (basic and acidic residues) spans 615 to 624; it reads SLDKTDKSGS. A compositionally biased stretch (polar residues) spans 627-640; that stretch reads EVNNNRSLEDTNIQ.

Belongs to the DNA polymerase type-B-like family. In terms of assembly, associates with the cleavage and polyadenylation specificity factor (CPSF) complex. Mg(2+) serves as cofactor. Mn(2+) is required as a cofactor.

It is found in the nucleus. It localises to the nucleolus. The protein localises to the nucleus speckle. The catalysed reaction is RNA(n) + UTP = RNA(n)-3'-uridine ribonucleotide + diphosphate. It catalyses the reaction RNA(n) + ATP = RNA(n)-3'-adenine ribonucleotide + diphosphate. In terms of biological role, poly(A) polymerase that creates the 3'-poly(A) tail of specific pre-mRNAs. In addition to polyadenylation, it is also required for the 3'-end cleavage of pre-mRNAs: binds to the 3'UTR of targeted pre-mRNAs and promotes the recruitment and assembly of the CPSF complex on the 3'UTR of pre-mRNAs. In addition to adenylyltransferase activity, also has uridylyltransferase activity. However, the ATP ratio is higher than UTP in cells, suggesting that it functions primarily as a poly(A) polymerase. The polypeptide is Speckle targeted PIP5K1A-regulated poly(A) polymerase (tut1) (Danio rerio (Zebrafish)).